The sequence spans 484 residues: Ubiquinone biosynthesis monooxygenase COQ6, mitochondrial (484 aa).

The transit peptide at Met1–Gln41 directs the protein to the mitochondrion.

Belongs to the UbiH/COQ6 family. As to quaternary structure, component of a multi-subunit COQ enzyme complex, composed of at least coq3, coq4, coq5, coq6, coq7 and coq9. Interacts with coq8b and coq7. FAD serves as cofactor.

The protein localises to the mitochondrion inner membrane. It localises to the golgi apparatus. Its subcellular location is the cell projection. It carries out the reaction a 4-hydroxy-3-(all-trans-polyprenyl)benzoate + 2 reduced [2Fe-2S]-[ferredoxin] + O2 + 2 H(+) = a 3,4-dihydroxy-5-(all-trans-polyprenyl)benzoate + 2 oxidized [2Fe-2S]-[ferredoxin] + H2O. The enzyme catalyses a 2-methoxy-6-(all-trans-polyprenyl)phenol + 2 reduced [2Fe-2S]-[ferredoxin] + O2 + 2 H(+) = a 2-methoxy-6-(all-trans-polyprenyl)benzene-1,4-diol + 2 oxidized [2Fe-2S]-[ferredoxin] + H2O. It functions in the pathway cofactor biosynthesis; ubiquinone biosynthesis. Its function is as follows. FAD-dependent monooxygenase required for two non-consecutive steps during ubiquinone biosynthesis. Required for the C5-ring hydroxylation during ubiquinone biosynthesis by catalyzing the hydroxylation of 4-hydroxy-3-(all-trans-polyprenyl)benzoic acid to 3,4-dihydroxy-5-(all-trans-polyprenyl)benzoic acid. Also acts downstream of coq4, for the C1-hydroxylation during ubiquinone biosynthesis by catalyzing the hydroxylation of 2-methoxy-6-(all-trans-polyprenyl)phenol to 2-methoxy-6-(all-trans-polyprenyl)benzene-1,4-diol. The electrons required for the hydroxylation reaction are funneled indirectly to coq6 from NADPH via a ferredoxin/ferredoxin reductase system. This Danio rerio (Zebrafish) protein is Ubiquinone biosynthesis monooxygenase COQ6, mitochondrial.